We begin with the raw amino-acid sequence, 435 residues long: Acetyltransferase atnC (435 aa).

A run of 3 helical transmembrane segments spans residues 10–30 (AFANVALLFAVQILIPAFLII), 40–60 (YFGIPCIAFPAYLIFQLAPTL), and 68–88 (SFLACEGILVVAHCVNLLLIL). Asn203 carries an N-linked (GlcNAc...) asparagine glycan. 3 helical membrane-spanning segments follow: residues 306–326 (FLVFLLSGILHAVSANIMGLS), 333–353 (IPYFSSFALGMMLEDGVQAFY), and 370–390 (VVGFIWVVFWMSLTSPWYMFP). Asn406 carries N-linked (GlcNAc...) asparagine glycosylation. Residues 407 to 427 (LTEVIGMPMMWGLLGTFGMLV) traverse the membrane as a helical segment.

This sequence belongs to the wax synthase family.

The protein resides in the membrane. It functions in the pathway secondary metabolite biosynthesis; terpenoid biosynthesis. Acetyltransferase; part of the gene cluster that mediates the biosynthesis of the meroterpenoids arthripenoids. The pathway begins with the HR-PKS atnH that catalyzes two chain-extension steps to form a reduced triketide, which then primes the SAT domain in the NR-PKS atnG to initiate three more cycles of extension to give a linear hexaketide corresponding to the polyketide part of arthripenoids. The FAD-dependent monooxygenase atnJ then performs an oxidative decarboxylation at C11 of the atnH/atnG product, via an electrophilic aromatic hydroxylation with concomitant ipso-decarboxylation. The membrane-bound polyprenyl transferase atnF then introduces a farnesyl group before the FAD-dependent monooxygenase atnK functions as the first epoxidase on terminal C12'-C13' olefin, followed by a second epoxidation on C7'-C8' catalyzed by atnA. The terpene cyclase/mutase atnI then initiates the sequential tricyclic ring formation through protonation of the terminal epoxide and catalyzes the regioselective and stereoselective 6/6/6-tricyclic ring formation. The cytochrome P450 monooxygenase atnM is responsible for hydroxylating both C1' and C10'. The next steps may involve ketoreduction and acetyl transfer by the ketoreductase atnB and the acetyltransferase atnC, and lead to the production of arthripenoid B, the final biosynthetic product of the atn cluster. The hydroquinone moiety in arthripenoid B is prone to undergo spontaneous oxidation to afford a benzoquinone compound, a key intermediate for generating structure diversity. For instance, addition of a cysteine followed by ring contraction gives arthripenoid A, tautomerization gives the main product arthripenoid C, addition of a molecular of water or amine affords arthripenoid D or E, respectively, and loss of one water forms arthripenoid F. The protein is Acetyltransferase atnC of Arthrinium sp.